The chain runs to 192 residues: Putative manganese efflux pump MntP (192 aa).

6 helical membrane-spanning segments follow: residues L3–F23, F38–L58, G61–I81, V101–V121, I130–G150, and I167–W187.

The protein belongs to the MntP (TC 9.B.29) family.

Its subcellular location is the cell membrane. Its function is as follows. Probably functions as a manganese efflux pump. The chain is Putative manganese efflux pump MntP from Methanospirillum hungatei JF-1 (strain ATCC 27890 / DSM 864 / NBRC 100397 / JF-1).